A 163-amino-acid polypeptide reads, in one-letter code: Lipoprotein signal peptidase (163 aa).

The next 4 membrane-spanning stretches (helical) occupy residues alanine 9–leucine 29, isoleucine 42–glycine 62, tryptophan 67–leucine 87, and serine 93–isoleucine 113. Residues aspartate 123 and aspartate 141 contribute to the active site. Residues phenylalanine 137–leucine 157 form a helical membrane-spanning segment.

The protein belongs to the peptidase A8 family.

The protein resides in the cell inner membrane. The catalysed reaction is Release of signal peptides from bacterial membrane prolipoproteins. Hydrolyzes -Xaa-Yaa-Zaa-|-(S,diacylglyceryl)Cys-, in which Xaa is hydrophobic (preferably Leu), and Yaa (Ala or Ser) and Zaa (Gly or Ala) have small, neutral side chains.. The protein operates within protein modification; lipoprotein biosynthesis (signal peptide cleavage). This protein specifically catalyzes the removal of signal peptides from prolipoproteins. This Coxiella burnetii (strain RSA 493 / Nine Mile phase I) protein is Lipoprotein signal peptidase.